We begin with the raw amino-acid sequence, 123 residues long: uncharacterized protein (123 aa).

A run of 3 helical transmembrane segments spans residues 7–29, 44–66, and 79–101; these read VKHL…FDAV, FFIH…VHRI, and LGLY…AAMA.

The protein localises to the cell membrane. This is an uncharacterized protein from Bacillus subtilis (strain 168).